The following is a 290-amino-acid chain: Zinc finger matrin-type protein 3 (290 aa).

2 Matrin-type zinc fingers span residues 70–100 and 148–178; these read LFCK…KLRN and DYCK…RLRL. Disordered regions lie at residues 182–203 and 266–290; these read QSHS…EGSE and ESKQ…GYVQ. Residues 246–276 form a Matrin-type 3 zinc finger; sequence FYCSMCNVGAGEEVEFRQHLESKQHKSKVSE. Basic and acidic residues predominate over residues 266-283; it reads ESKQHKSKVSEQRYRSEM.

As to quaternary structure, interacts with dsRNA. Constitutively expressed in brain and testis. Also expressed in lung, kidney and spleen after whole body gamma irradiation.

It is found in the nucleus. Its subcellular location is the nucleolus. Its function is as follows. Acts as a bona fide target gene of p53/TP53. May play a role in the TP53-dependent growth regulatory pathway. May contribute to TP53-mediated apoptosis by regulation of TP53 expression and translocation to the nucleus and nucleolus. This Mus musculus (Mouse) protein is Zinc finger matrin-type protein 3.